We begin with the raw amino-acid sequence, 393 residues long: Cysteine protease ATG4B (393 aa).

Methionine 1 is modified (N-acetylmethionine). Serine 34 carries the post-translational modification Phosphoserine; by PKB/AKT1 and PKB/AKT2. The active-site Nucleophile is the cysteine 74. Cysteine 189 is modified (S-nitrosocysteine). Catalysis depends on residues aspartate 278 and histidine 280. Cysteine 292 and cysteine 301 each carry S-nitrosocysteine. Cysteine 292 and cysteine 361 are disulfide-bonded. Residue serine 316 is modified to Phosphoserine; by ULK1. Serine 383 bears the Phosphoserine; by STK26 mark. An LIR motif is present at residues 388–391; it reads FEIL. The residue at position 392 (serine 392) is a Phosphoserine.

This sequence belongs to the peptidase C54 family. In terms of assembly, interacts with PFKP; promoting phosphorylation of ATG4B at Ser-34. Interacts with GBP7. In terms of processing, phosphorylation at Ser-383 and Ser-392 promotes autophagy by increasing protein delipidation activity without affecting proteolytic activation of ATG8 proteins. Phosphorylation at Ser-316 by ULK1 inhibits autophagy by decreasing both proteolytic activation and delipidation activities. Phosphorylation at Ser-316 is dephosphorylated by protein phosphatase 2A (PP2A). Phosphorylation at Ser-34 by AKT2 promotes its hydrolase activity, leading to increased proteolytic activation and delipidation of ATG8 family proteins. Phosphorylation at Ser-34 by AKT1 promotes mitochondrial localization and inhibition of the F1F0-ATP synthase activity, leading to elevation of mitochondrial reactive oxygen species (ROS). Post-translationally, ubiquitinated by RNF5, leading to its degradation by the proteasome. S-nitrosylation at Cys-189 and Cys-292 in response to high glucose decreases both proteolytic activation and delipidation activities. In terms of processing, O-glycosylated by OGT, leading to increase protease activity, thereby promoting the proteolytic activation of ATG8 family proteins. Post-translationally, forms reversible intrachain disulfide bonds in response to oxidative stress. Forms interchain disulfide bonds, leading to formation of homooligomers in response to oxidation.

It is found in the cytoplasm. The protein resides in the cytosol. The protein localises to the cytoplasmic vesicle. Its subcellular location is the autophagosome. It localises to the endoplasmic reticulum. It is found in the mitochondrion. The enzyme catalyses [protein]-C-terminal L-amino acid-glycyl-phosphatidylethanolamide + H2O = [protein]-C-terminal L-amino acid-glycine + a 1,2-diacyl-sn-glycero-3-phosphoethanolamine. The catalysed reaction is [protein]-C-terminal L-amino acid-glycyl-phosphatidylserine + H2O = [protein]-C-terminal L-amino acid-glycine + a 1,2-diacyl-sn-glycero-3-phospho-L-serine. With respect to regulation, inhibited by N-ethylmaleimide. Redox-regulated during autophagy since reducing conditions activate ATG4A whereas an oxidizing environment such as the presence of H(2)O(2) inhibits its activity. The cysteine protease activity compounds is inhibited by styrylquinoline compounds 4-28 and LV-320. Cysteine protease that plays a key role in autophagy by mediating both proteolytic activation and delipidation of ATG8 family proteins. Required for canonical autophagy (macroautophagy), non-canonical autophagy as well as for mitophagy. The protease activity is required for proteolytic activation of ATG8 family proteins: cleaves the C-terminal amino acid of ATG8 proteins MAP1LC3A, MAP1LC3B, MAP1LC3C, GABARAPL1, GABARAPL2 and GABARAP, to reveal a C-terminal glycine. Exposure of the glycine at the C-terminus is essential for ATG8 proteins conjugation to phosphatidylethanolamine (PE) and insertion to membranes, which is necessary for autophagy. Protease activity is also required to counteract formation of high-molecular weight conjugates of ATG8 proteins (ATG8ylation): acts as a deubiquitinating-like enzyme that removes ATG8 conjugated to other proteins, such as ATG3. In addition to the protease activity, also mediates delipidation of ATG8 family proteins. Catalyzes delipidation of PE-conjugated forms of ATG8 proteins during macroautophagy. Also involved in non-canonical autophagy, a parallel pathway involving conjugation of ATG8 proteins to single membranes at endolysosomal compartments, by catalyzing delipidation of ATG8 proteins conjugated to phosphatidylserine (PS). Compared to other members of the family (ATG4A, ATG4C or ATG4C), constitutes the major protein for proteolytic activation of ATG8 proteins, while it displays weaker delipidation activity than other ATG4 paralogs. Involved in phagophore growth during mitophagy independently of its protease activity and of ATG8 proteins: acts by regulating ATG9A trafficking to mitochondria and promoting phagophore-endoplasmic reticulum contacts during the lipid transfer phase of mitophagy. In Homo sapiens (Human), this protein is Cysteine protease ATG4B.